Consider the following 425-residue polypeptide: Glutamate-1-semialdehyde 2,1-aminomutase (425 aa).

Lys264 carries the post-translational modification N6-(pyridoxal phosphate)lysine.

This sequence belongs to the class-III pyridoxal-phosphate-dependent aminotransferase family. HemL subfamily. In terms of assembly, homodimer. It depends on pyridoxal 5'-phosphate as a cofactor.

The protein resides in the cytoplasm. It catalyses the reaction (S)-4-amino-5-oxopentanoate = 5-aminolevulinate. Its pathway is porphyrin-containing compound metabolism; protoporphyrin-IX biosynthesis; 5-aminolevulinate from L-glutamyl-tRNA(Glu): step 2/2. This chain is Glutamate-1-semialdehyde 2,1-aminomutase, found in Hydrogenobaculum sp. (strain Y04AAS1).